A 153-amino-acid chain; its full sequence is SsrA-binding protein (153 aa).

Belongs to the SmpB family.

It localises to the cytoplasm. In terms of biological role, required for rescue of stalled ribosomes mediated by trans-translation. Binds to transfer-messenger RNA (tmRNA), required for stable association of tmRNA with ribosomes. tmRNA and SmpB together mimic tRNA shape, replacing the anticodon stem-loop with SmpB. tmRNA is encoded by the ssrA gene; the 2 termini fold to resemble tRNA(Ala) and it encodes a 'tag peptide', a short internal open reading frame. During trans-translation Ala-aminoacylated tmRNA acts like a tRNA, entering the A-site of stalled ribosomes, displacing the stalled mRNA. The ribosome then switches to translate the ORF on the tmRNA; the nascent peptide is terminated with the 'tag peptide' encoded by the tmRNA and targeted for degradation. The ribosome is freed to recommence translation, which seems to be the essential function of trans-translation. This is SsrA-binding protein from Lactobacillus delbrueckii subsp. bulgaricus (strain ATCC 11842 / DSM 20081 / BCRC 10696 / JCM 1002 / NBRC 13953 / NCIMB 11778 / NCTC 12712 / WDCM 00102 / Lb 14).